A 65-amino-acid chain; its full sequence is Large ribosomal subunit protein bL35 (65 aa).

The disordered stretch occupies residues 1 to 26; sequence MPKIKTVRGAAKRFKKTASGGFKRKQ. A compositionally biased stretch (basic residues) spans 10-26; the sequence is AAKRFKKTASGGFKRKQ.

This sequence belongs to the bacterial ribosomal protein bL35 family.

The polypeptide is Large ribosomal subunit protein bL35 (Actinobacillus succinogenes (strain ATCC 55618 / DSM 22257 / CCUG 43843 / 130Z)).